A 107-amino-acid chain; its full sequence is Nucleoid-associated protein Lferr_1592 (107 aa).

The protein belongs to the YbaB/EbfC family. As to quaternary structure, homodimer.

The protein resides in the cytoplasm. It localises to the nucleoid. Its function is as follows. Binds to DNA and alters its conformation. May be involved in regulation of gene expression, nucleoid organization and DNA protection. This is Nucleoid-associated protein Lferr_1592 from Acidithiobacillus ferrooxidans (strain ATCC 53993 / BNL-5-31) (Leptospirillum ferrooxidans (ATCC 53993)).